The primary structure comprises 65 residues: Probable tautomerase RSp1151 (65 aa).

The active-site Proton acceptor; via imino nitrogen is the P2.

Belongs to the 4-oxalocrotonate tautomerase family.

The chain is Probable tautomerase RSp1151 from Ralstonia nicotianae (strain ATCC BAA-1114 / GMI1000) (Ralstonia solanacearum).